The sequence spans 345 residues: MSYLIKPKNYKPLLDLKQTELGIKQIKEFFQLNLSSELRLRRVTAPLFVLKGMGINDDLNGIERPVSFPIKDLGDAQAEVVHSLAKWKRLTLADYNIEPGYGIYTDMNAIRSDEELGNLHSLYVDQWDWERVITNEDRNVEFLKEIVNRIYAAMIRTEYMVYEMYPQIKPCLPQKLHFIHSEELRQLYPNLEPKCREHAICQKYGAVFIIGIGCKLSDGKKHDGRAPDYDDYTSTGLNNLPGLNGDLLLWDDVLQRSIELSSMGVRVDREALQRQLKEENEEERLKLYFHKRLMDDTLPLSIGGGIGQSRLCMFYLRKAHIGEIQASIWPEDMRKECEELDIHLI.

The protein belongs to the class-II aminoacyl-tRNA synthetase family. AsnA subfamily.

It is found in the cytoplasm. The catalysed reaction is L-aspartate + NH4(+) + ATP = L-asparagine + AMP + diphosphate + H(+). It functions in the pathway amino-acid biosynthesis; L-asparagine biosynthesis; L-asparagine from L-aspartate (ammonia route): step 1/1. The protein is Aspartate--ammonia ligase of Bacteroides thetaiotaomicron (strain ATCC 29148 / DSM 2079 / JCM 5827 / CCUG 10774 / NCTC 10582 / VPI-5482 / E50).